The chain runs to 93 residues: Exodeoxyribonuclease 7 small subunit (93 aa).

A disordered region spans residues 1-22 (MAKTASPGATPPGNGAEPLPDN).

It belongs to the XseB family. Heterooligomer composed of large and small subunits.

The protein localises to the cytoplasm. The catalysed reaction is Exonucleolytic cleavage in either 5'- to 3'- or 3'- to 5'-direction to yield nucleoside 5'-phosphates.. In terms of biological role, bidirectionally degrades single-stranded DNA into large acid-insoluble oligonucleotides, which are then degraded further into small acid-soluble oligonucleotides. This Burkholderia multivorans (strain ATCC 17616 / 249) protein is Exodeoxyribonuclease 7 small subunit.